The following is a 225-amino-acid chain: MLKQPEMILIDVDGTLVDSVPDLTFCTDTMMERLGLPLRGETKVRQWVGNGVERLIKRALVDNMEGEPEEDLYQKAETIFLALYADNTSKRSHLYPGVNEGLAWLKSQGYRVGCVTNKAAQFTYPLLTELGIIDYFEIVISGDTLPEKKPHPAPLLHAASHFGIAPEKALMIGDSISDVKAARAANFQIVCLSYGYNHGVDIRDSQPDSVIDSLIEIKNLLSQAA.

The active-site Nucleophile is aspartate 11. Mg(2+)-binding residues include aspartate 11, aspartate 13, and aspartate 174.

Belongs to the HAD-like hydrolase superfamily. CbbY/CbbZ/Gph/YieH family. The cofactor is Mg(2+).

The enzyme catalyses 2-phosphoglycolate + H2O = glycolate + phosphate. It functions in the pathway organic acid metabolism; glycolate biosynthesis; glycolate from 2-phosphoglycolate: step 1/1. Specifically catalyzes the dephosphorylation of 2-phosphoglycolate. Is involved in the dissimilation of the intracellular 2-phosphoglycolate formed during the DNA repair of 3'-phosphoglycolate ends, a major class of DNA lesions induced by oxidative stress. The polypeptide is Phosphoglycolate phosphatase (Nitrosococcus oceani (strain ATCC 19707 / BCRC 17464 / JCM 30415 / NCIMB 11848 / C-107)).